The primary structure comprises 431 residues: Adenylosuccinate synthetase (431 aa).

GTP-binding positions include 13 to 19 (GDEGKGK) and 41 to 43 (GHT). Asp14 (proton acceptor) is an active-site residue. Mg(2+)-binding residues include Asp14 and Gly41. IMP is bound by residues 14-17 (DEGK), 39-42 (NAGH), Thr130, Arg144, Gln225, Thr240, and Arg304. Catalysis depends on His42, which acts as the Proton donor. 300–306 (ATTGRKR) serves as a coordination point for substrate. Residues Arg306, 332–334 (KLD), and 415–417 (STG) contribute to the GTP site.

It belongs to the adenylosuccinate synthetase family. As to quaternary structure, homodimer. It depends on Mg(2+) as a cofactor.

The protein localises to the cytoplasm. The enzyme catalyses IMP + L-aspartate + GTP = N(6)-(1,2-dicarboxyethyl)-AMP + GDP + phosphate + 2 H(+). Its pathway is purine metabolism; AMP biosynthesis via de novo pathway; AMP from IMP: step 1/2. Functionally, plays an important role in the de novo pathway of purine nucleotide biosynthesis. Catalyzes the first committed step in the biosynthesis of AMP from IMP. The polypeptide is Adenylosuccinate synthetase (Shewanella oneidensis (strain ATCC 700550 / JCM 31522 / CIP 106686 / LMG 19005 / NCIMB 14063 / MR-1)).